The following is a 326-amino-acid chain: TATA-box-binding protein (326 aa).

Disordered regions lie at residues 1–21 and 114–146; these read MDQNNSLPPYAQGLASPQGAM and LTTAPLPGTTPLYPSPVTPMTPITPATPASESS. Over residues 114–125 the composition is skewed to low complexity; the sequence is LTTAPLPGTTPL. 2 repeat units span residues 152 to 228 and 242 to 319. Residues N154, R190, K205, N244, and R281 each coordinate DNA.

The protein belongs to the TBP family. As to quaternary structure, binds DNA as monomer. Belongs to the TFIID complex together with the TBP-associated factors (TAFs). Part of a TFIID-containing RNA polymerase II pre-initiation complex that is composed of TBP and at least GTF2A1, GTF2A2, GTF2E1, GTF2E2, GTF2F1, GTF2H2, GTF2H3, GTF2H4, GTF2H5, GTF2B, TCEA1, ERCC2, ERCC3, TAF1, TAF2, TAF3, TAF4, TAF5, TAF6, TAF7, TAF8, TAF9, TAF10, TAF11, TAF12 and TAF13. Component of the transcription factor SL1/TIF-IB complex, composed of TBP and at least TAF1A, TAF1B, TAF1C and TAF1D. Association of TBP to form either TFIID or SL1/TIF-IB appears to be mutually exclusive. Interacts with TAF1A, TAF1B and TAF1C. Interacts with TFIIB, NCOA6, DRAP1, DR1 and ELF3. Interacts with SPIB, SNAPC1, SNAPC2 and SNAPC4. Interacts with UTF1. Interacts with BRF2; this interaction promotes recruitment of BRF2 to TATA box-containing promoters. Interacts with UBTF. Interacts with GPBP1. Interacts with CITED2. Interacts with ATF7IP. Interacts with LLPH. Interacts with HSF1 (via transactivation domain). Interacts with GTF2B (via C-terminus); this interaction with promoter-bound TBP guides RNA polymerase II into the pre-initiation complex (PIC). Interacts with PAX5. Interacts with MSX1; the interaction may inhibit MSX1 autoinactivation.

The protein localises to the nucleus. Functionally, general transcription factor that functions at the core of the DNA-binding multiprotein factor TFIID. Binding of TFIID to the TATA box is the initial transcriptional step of the pre-initiation complex (PIC), playing a role in the activation of eukaryotic genes transcribed by RNA polymerase II. Component of a BRF2-containing transcription factor complex that regulates transcription mediated by RNA polymerase III. Component of the transcription factor SL1/TIF-IB complex, which is involved in the assembly of the PIC (pre-initiation complex) during RNA polymerase I-dependent transcription. The rate of PIC formation probably is primarily dependent on the rate of association of SL1 with the rDNA promoter. SL1 is involved in stabilization of nucleolar transcription factor 1/UBTF on rDNA. This Macaca fascicularis (Crab-eating macaque) protein is TATA-box-binding protein (TBP).